Consider the following 213-residue polypeptide: Na(+)-translocating NADH-quinone reductase subunit E (213 aa).

A run of 6 helical transmembrane segments spans residues 12–32, 40–60, 92–112, 124–144, 155–175, and 191–211; these read AVFV…FLAV, IGLG…NQLI, FLGF…LEMF, LGIF…SLFM, VVFG…LAGI, and LGIT…FSGI.

This sequence belongs to the NqrDE/RnfAE family. As to quaternary structure, composed of six subunits; NqrA, NqrB, NqrC, NqrD, NqrE and NqrF.

It localises to the cell inner membrane. The enzyme catalyses a ubiquinone + n Na(+)(in) + NADH + H(+) = a ubiquinol + n Na(+)(out) + NAD(+). Functionally, NQR complex catalyzes the reduction of ubiquinone-1 to ubiquinol by two successive reactions, coupled with the transport of Na(+) ions from the cytoplasm to the periplasm. NqrA to NqrE are probably involved in the second step, the conversion of ubisemiquinone to ubiquinol. The polypeptide is Na(+)-translocating NADH-quinone reductase subunit E (Rhodopirellula baltica (strain DSM 10527 / NCIMB 13988 / SH1)).